A 359-amino-acid polypeptide reads, in one-letter code: Patr class I histocompatibility antigen, B-1 alpha chain (359 aa).

The first 20 residues, 1–20 (APRTVLLLLSAALALTETWA), serve as a signal peptide directing secretion. The tract at residues 21–110 (GSHSMRYFYT…ALRYYNQSEA (90 aa)) is alpha-1. The Extracellular portion of the chain corresponds to 21–305 (GSHSMRYFYT…PSSQSTIPIV (285 aa)). A glycan (N-linked (GlcNAc...) asparagine) is linked at Asn106. The tract at residues 111–202 (GSHTWQTMYG…ENGKETLQRA (92 aa)) is alpha-2. Cystine bridges form between Cys121/Cys184 and Cys223/Cys279. Residues 203 to 294 (DPPKTHVTHH…GLPKPLTLRW (92 aa)) are alpha-3. Residues 205–291 (PKTHVTHHPI…QHEGLPKPLT (87 aa)) enclose the Ig-like C1-type domain. The connecting peptide stretch occupies residues 295-305 (EPSSQSTIPIV). Residues 306-329 (GIVAGLAVLVVTVAVVAVVAAVMC) form a helical membrane-spanning segment. At 330–359 (RRKSSGGKGGSYSQAASSDSAQGSDVSLTA) the chain is on the cytoplasmic side. Positions 332-359 (KSSGGKGGSYSQAASSDSAQGSDVSLTA) are disordered. Low complexity predominate over residues 340-359 (SYSQAASSDSAQGSDVSLTA). Phosphoserine occurs at positions 353 and 356.

Belongs to the MHC class I family. In terms of assembly, heterodimer of an alpha chain and a beta chain (beta-2-microglobulin).

It is found in the membrane. Functionally, involved in the presentation of foreign antigens to the immune system. The protein is Patr class I histocompatibility antigen, B-1 alpha chain of Pan troglodytes (Chimpanzee).